The primary structure comprises 165 residues: Cyclic pyranopterin monophosphate synthase (165 aa).

Residues 83–85 (FCH) and 120–121 (ME) each bind substrate. Residue aspartate 135 is part of the active site.

The protein belongs to the MoaC family. In terms of assembly, homohexamer; trimer of dimers.

The catalysed reaction is (8S)-3',8-cyclo-7,8-dihydroguanosine 5'-triphosphate = cyclic pyranopterin phosphate + diphosphate. It participates in cofactor biosynthesis; molybdopterin biosynthesis. In terms of biological role, catalyzes the conversion of (8S)-3',8-cyclo-7,8-dihydroguanosine 5'-triphosphate to cyclic pyranopterin monophosphate (cPMP). This is Cyclic pyranopterin monophosphate synthase from Xanthomonas oryzae pv. oryzae (strain MAFF 311018).